The chain runs to 601 residues: Testis-specific gene 10 protein (601 aa).

The segment covering 1–10 has biased composition (basic residues); sequence MMRSRSKSPR. Disordered regions lie at residues 1–20 and 563–588; these read MMRS…RGAN and VSST…DRGL. An interaction with HIF1A region spans residues 459 to 592; sequence QMTNERISMQ…SPDRGLDRSL (134 aa). A compositionally biased stretch (polar residues) spans 563–573; sequence VSSTMKPNTKC. Basic and acidic residues predominate over residues 574–588; sequence HSPERAHHRSPDRGL. Ser591 carries the phosphoserine modification.

Belongs to the CEP135/TSGA10 family. As to quaternary structure, interacts with HIF1A. In terms of processing, processed into N-terminal 27-kDa and C-terminal 55-kDa fragments.

It is found in the cytoplasm. Its subcellular location is the cytoskeleton. It localises to the microtubule organizing center. The protein resides in the centrosome. The protein localises to the centriole. Its function is as follows. Plays a role in spermatogenesis. When overexpressed, prevents nuclear localization of HIF1A. The chain is Testis-specific gene 10 protein (TSGA10) from Macaca fascicularis (Crab-eating macaque).